The following is a 173-amino-acid chain: Crossover junction endodeoxyribonuclease RuvC (173 aa).

Residues Asp8, Glu67, and Asp139 contribute to the active site. The Mg(2+) site is built by Asp8, Glu67, and Asp139.

It belongs to the RuvC family. As to quaternary structure, homodimer which binds Holliday junction (HJ) DNA. The HJ becomes 2-fold symmetrical on binding to RuvC with unstacked arms; it has a different conformation from HJ DNA in complex with RuvA. In the full resolvosome a probable DNA-RuvA(4)-RuvB(12)-RuvC(2) complex forms which resolves the HJ. Requires Mg(2+) as cofactor.

The protein resides in the cytoplasm. It catalyses the reaction Endonucleolytic cleavage at a junction such as a reciprocal single-stranded crossover between two homologous DNA duplexes (Holliday junction).. In terms of biological role, the RuvA-RuvB-RuvC complex processes Holliday junction (HJ) DNA during genetic recombination and DNA repair. Endonuclease that resolves HJ intermediates. Cleaves cruciform DNA by making single-stranded nicks across the HJ at symmetrical positions within the homologous arms, yielding a 5'-phosphate and a 3'-hydroxyl group; requires a central core of homology in the junction. The consensus cleavage sequence is 5'-(A/T)TT(C/G)-3'. Cleavage occurs on the 3'-side of the TT dinucleotide at the point of strand exchange. HJ branch migration catalyzed by RuvA-RuvB allows RuvC to scan DNA until it finds its consensus sequence, where it cleaves and resolves the cruciform DNA. This chain is Crossover junction endodeoxyribonuclease RuvC, found in Vibrio parahaemolyticus serotype O3:K6 (strain RIMD 2210633).